The following is a 284-amino-acid chain: NAD kinase (284 aa).

Catalysis depends on aspartate 70, which acts as the Proton acceptor. Residues 70-71 (DG), 139-140 (NE), lysine 167, aspartate 169, leucine 177, 180-185 (TAYNLS), and glutamine 236 each bind NAD(+).

It belongs to the NAD kinase family. A divalent metal cation serves as cofactor.

The protein resides in the cytoplasm. The enzyme catalyses NAD(+) + ATP = ADP + NADP(+) + H(+). Functionally, involved in the regulation of the intracellular balance of NAD and NADP, and is a key enzyme in the biosynthesis of NADP. Catalyzes specifically the phosphorylation on 2'-hydroxyl of the adenosine moiety of NAD to yield NADP. In Helicobacter pylori (strain P12), this protein is NAD kinase.